The primary structure comprises 215 residues: Fibroblast growth factor 17 (215 aa).

Residues 1–22 (MYGINQRYLYISFHFFVVWCHA) form the signal peptide. Asn137 carries an N-linked (GlcNAc...) asparagine glycan.

It belongs to the heparin-binding growth factors family.

It is found in the secreted. Involved in dorsal-ventral embryonic patterning, by promoting expression of bone morphogenetic protein (BMP) antagonists such as chd. Also involved in anterior-posterior neural patterning and in mesoderm induction. This chain is Fibroblast growth factor 17 (fgf17), found in Danio rerio (Zebrafish).